Reading from the N-terminus, the 127-residue chain is 3-aminoacrylate deaminase RutC (127 aa).

This sequence belongs to the RutC family.

It carries out the reaction (Z)-3-aminoacrylate + H2O + H(+) = 3-oxopropanoate + NH4(+). Functionally, involved in pyrimidine catabolism. Catalyzes the deamination of 3-aminoacrylate to malonic semialdehyde, a reaction that can also occur spontaneously. RutC may facilitate the reaction and modulate the metabolic fitness, rather than catalyzing essential functions. This chain is 3-aminoacrylate deaminase RutC, found in Pseudomonas syringae pv. syringae (strain B728a).